Consider the following 553-residue polypeptide: Threonylcarbamoyladenosine tRNA methylthiotransferase (553 aa).

The tract at residues S21 to P61 is disordered. Composition is skewed to basic and acidic residues over residues E23 to Q32 and I47 to T58. Residues Q72–K179 enclose the MTTase N-terminal domain. Residues C81, C116, C145, C221, C225, and C228 each contribute to the [4Fe-4S] cluster site. Residues R207–A438 form the Radical SAM core domain. A TRAM domain is found at A438–D500. A helical membrane pass occupies residues V533 to L553.

The protein belongs to the methylthiotransferase family. CDKAL1 subfamily. [4Fe-4S] cluster is required as a cofactor.

It localises to the membrane. It carries out the reaction N(6)-L-threonylcarbamoyladenosine(37) in tRNA + (sulfur carrier)-SH + AH2 + 2 S-adenosyl-L-methionine = 2-methylsulfanyl-N(6)-L-threonylcarbamoyladenosine(37) in tRNA + (sulfur carrier)-H + 5'-deoxyadenosine + L-methionine + A + S-adenosyl-L-homocysteine + 2 H(+). Functionally, catalyzes the methylthiolation of N6-threonylcarbamoyladenosine (t(6)A), leading to the formation of 2-methylthio-N6-threonylcarbamoyladenosine (ms(2)t(6)A) at position 37 in tRNAs that read codons beginning with adenine. The chain is Threonylcarbamoyladenosine tRNA methylthiotransferase from Drosophila pseudoobscura pseudoobscura (Fruit fly).